A 230-amino-acid chain; its full sequence is Ureidoacrylate amidohydrolase RutB (230 aa).

Catalysis depends on Asp-24, which acts as the Proton acceptor. Lys-133 is a catalytic residue. The Nucleophile role is filled by Cys-166.

The protein belongs to the isochorismatase family. RutB subfamily.

It carries out the reaction (Z)-3-ureidoacrylate + H2O + H(+) = (Z)-3-aminoacrylate + NH4(+) + CO2. It catalyses the reaction (Z)-3-ureidoacrylate + H2O = (Z)-3-aminoacrylate + carbamate + H(+). The enzyme catalyses (Z)-2-methylureidoacrylate + H2O + H(+) = (Z)-2-methylaminoacrylate + NH4(+) + CO2. Hydrolyzes ureidoacrylate to form aminoacrylate and carbamate. The carbamate hydrolyzes spontaneously, thereby releasing one of the nitrogen atoms of the pyrimidine ring as ammonia and one of its carbon atoms as CO2. In Enterobacter sp. (strain 638), this protein is Ureidoacrylate amidohydrolase RutB.